The chain runs to 145 residues: D-aminoacyl-tRNA deacylase (145 aa).

Positions 137-138 match the Gly-cisPro motif, important for rejection of L-amino acids motif; it reads GP.

This sequence belongs to the DTD family. In terms of assembly, homodimer.

The protein localises to the cytoplasm. It catalyses the reaction glycyl-tRNA(Ala) + H2O = tRNA(Ala) + glycine + H(+). The enzyme catalyses a D-aminoacyl-tRNA + H2O = a tRNA + a D-alpha-amino acid + H(+). Functionally, an aminoacyl-tRNA editing enzyme that deacylates mischarged D-aminoacyl-tRNAs. Also deacylates mischarged glycyl-tRNA(Ala), protecting cells against glycine mischarging by AlaRS. Acts via tRNA-based rather than protein-based catalysis; rejects L-amino acids rather than detecting D-amino acids in the active site. By recycling D-aminoacyl-tRNA to D-amino acids and free tRNA molecules, this enzyme counteracts the toxicity associated with the formation of D-aminoacyl-tRNA entities in vivo and helps enforce protein L-homochirality. This chain is D-aminoacyl-tRNA deacylase, found in Dichelobacter nodosus (strain VCS1703A).